The following is a 265-amino-acid chain: Phosphonates import ATP-binding protein PhnC 1 (265 aa).

The ABC transporter domain maps to 7–252; sequence IEVSNLSKSF…KLNEIYGTAA (246 aa). 39–46 lines the ATP pocket; it reads GASGSGKS.

This sequence belongs to the ABC transporter superfamily. Phosphonates importer (TC 3.A.1.9.1) family. The complex is composed of two ATP-binding proteins (PhnC), two transmembrane proteins (PhnE) and a solute-binding protein (PhnD).

The protein localises to the cell inner membrane. It catalyses the reaction phosphonate(out) + ATP + H2O = phosphonate(in) + ADP + phosphate + H(+). Part of the ABC transporter complex PhnCDE involved in phosphonates import. Responsible for energy coupling to the transport system. This is Phosphonates import ATP-binding protein PhnC 1 from Nostoc sp. (strain PCC 7120 / SAG 25.82 / UTEX 2576).